A 354-amino-acid polypeptide reads, in one-letter code: DnaJ homolog shv (354 aa).

An N-terminal signal peptide occupies residues 1–22 (MQLIKCLVIIQLSLLLVEESFA). The 66-residue stretch at 25 to 90 (DFYKILNVKK…DKRKTYDRCG (66 aa)) folds into the J domain. 2 N-linked (GlcNAc...) asparagine glycosylation sites follow: Asn260 and Asn312.

As to expression, in the testes, detected at low levels in somatic hub cells, cyst stem cells and the apical tip (at protein level). Levels in the testes decrease with age (at protein level). Expressed at low levels in hub cells, cyst stem cells and germline stem cells, and at high levels in spermatocytes and cyst cells.

Its subcellular location is the nucleus. The protein localises to the cell membrane. It localises to the secreted. In terms of biological role, maintains stem cell niche architecture in the testes. Activates an extracellular integrin beta-PS pathway which regulates DE-cadherin (shg) levels in somatic hub cells, and is essential for maintaining the number of germline stem cells and the structure and localization of hub cells. The protein is DnaJ homolog shv of Drosophila melanogaster (Fruit fly).